Consider the following 914-residue polypeptide: PHD finger protein 14 (914 aa).

Positions 19–276 are disordered; the sequence is DALDYDSSDD…EDSLLERPQT (258 aa). Positions 53–68 are enriched in low complexity; the sequence is ESAAGSESDSDAAAAS. A compositionally biased stretch (basic and acidic residues) spans 90 to 102; the sequence is EKVKESFSEETSS. Acidic residues-rich tracts occupy residues 155–168 and 191–233; these read ELNEMDDYDSEDDN and GEED…DSEE. Residues 285-346 form a PHD-type 1 zinc finger; it reads ILICCVCLGD…PWFCDACKNG (62 aa). Residues Cys288, Cys291, Cys305, Cys308, His313, Cys316, Cys340, Cys343, Cys351, Cys354, His371, Cys374, Cys407, Cys410, Cys424, Cys429, His434, Cys437, Cys461, and His464 each contribute to the Zn(2+) site. A C2HC pre-PHD-type zinc finger spans residues 348–381; the sequence is SPSCELCPSQDGIFKETDAGRWVHVVCALYVPGV. The segment at 405-465 adopts a PHD-type 2 zinc-finger fold; sequence KECSLCEDTR…PFFAYCKQHA (61 aa). The stretch at 596-644 forms a coiled coil; it reads MIQIQDNIVEQKNLKDKLESEQEKLHMEYDKLCESLEDLQNVNGQLRTE. The PHD-type 3 zinc finger occupies 692-746; it reads LYSCGICKKNQDQHLLLLCDTCKLHYHLGCLDPPLTRMPKKTKNSYWQCSECDQA. The Zn(2+) site is built by Cys695, Cys698, Cys710, Cys713, His718, Cys721, Cys740, and Cys743. The segment at 777–838 is disordered; the sequence is PQEMSPEPKK…PKADDTRTEC (62 aa). Residues 792-802 are compositionally biased toward basic residues; it reads TRTRGQKRKRM. The segment covering 803 to 817 has biased composition (basic and acidic residues); the sequence is SICEEEKMEEPLPRE. The segment at 835–888 adopts a PHD-type 4 zinc-finger fold; sequence RTECTTCKGPGDNENLVRCDECRLCYHFGCLDPPLKKSPKQTGYGWICQECDTS. Zn(2+) is bound by residues Cys838, Cys841, Cys853, Cys856, His861, Cys864, Cys882, and Cys885. Residues 887–914 are disordered; the sequence is TSSSKEEEAQEVEEESVNEETAEQEIPD. Over residues 894 to 914 the composition is skewed to acidic residues; that stretch reads EAQEVEEESVNEETAEQEIPD.

As to quaternary structure, interacts with histone H3.

It localises to the nucleus. In terms of biological role, histone-binding protein. Binds preferentially to unmodified histone H3 but can also bind to a lesser extent to histone H3 trimethylated at 'Lys-9' (H3K9me3) as well as to histone H3 monomethylated at 'Lys-27' (H3K27ac) and trimethylated at 'Lys-27' (H3K27me3). Represses PDGFRA expression, thus playing a role in regulation of mesenchymal cell proliferation. The protein is PHD finger protein 14 of Danio rerio (Zebrafish).